Consider the following 85-residue polypeptide: Large ribosomal subunit protein bL27 (85 aa).

The span at Met-1–Arg-11 shows a compositional bias: polar residues. The interval Met-1–Arg-20 is disordered.

This sequence belongs to the bacterial ribosomal protein bL27 family.

This is Large ribosomal subunit protein bL27 from Sulfurihydrogenibium sp. (strain YO3AOP1).